Reading from the N-terminus, the 743-residue chain is Catalase-peroxidase (743 aa).

Residues 1–15 are compositionally biased toward polar residues; sequence MSSDSRPPQPDTSTQ. The interval 1–40 is disordered; it reads MSSDSRPPQPDTSTQSNSESESPAISSPTPQDHAPMTNRD. Positions 16 to 28 are enriched in low complexity; that stretch reads SNSESESPAISSP. Residues 110-233 constitute a cross-link (tryptophyl-tyrosyl-methioninium (Trp-Tyr) (with M-259)); the sequence is WHAAGTYRIQ…YGATTMGLIY (124 aa). The Proton acceptor role is filled by histidine 111. The segment at residues 233-259 is a cross-link (tryptophyl-tyrosyl-methioninium (Tyr-Met) (with W-110)); the sequence is YVNPEGPEGKPDPVAAAHDIRETFARM. Histidine 274 serves as a coordination point for heme b. Residues 490 to 511 form a disordered region; that stretch reads DKRGGANGGRLRLEPQKSWESN.

It belongs to the peroxidase family. Peroxidase/catalase subfamily. As to quaternary structure, homodimer or homotetramer. Heme b serves as cofactor. Formation of the three residue Trp-Tyr-Met cross-link is important for the catalase, but not the peroxidase activity of the enzyme.

The catalysed reaction is H2O2 + AH2 = A + 2 H2O. The enzyme catalyses 2 H2O2 = O2 + 2 H2O. In terms of biological role, bifunctional enzyme with both catalase and broad-spectrum peroxidase activity. The chain is Catalase-peroxidase from Mycobacterium ulcerans (strain Agy99).